A 185-amino-acid chain; its full sequence is Riboflavin kinase (185 aa).

Mg(2+) contacts are provided by T41 and N43. E122 (nucleophile) is an active-site residue.

The protein belongs to the flavokinase family. The cofactor is Zn(2+). Requires Mg(2+) as cofactor.

The catalysed reaction is riboflavin + ATP = FMN + ADP + H(+). The protein operates within cofactor biosynthesis; FMN biosynthesis; FMN from riboflavin (ATP route): step 1/1. Functionally, catalyzes the phosphorylation of riboflavin (vitamin B2) to form flavin mononucleotide (FMN) coenzyme. This Kluyveromyces lactis (strain ATCC 8585 / CBS 2359 / DSM 70799 / NBRC 1267 / NRRL Y-1140 / WM37) (Yeast) protein is Riboflavin kinase (FMN1).